The primary structure comprises 179 residues: Transcription termination/antitermination protein NusG (179 aa).

The 28-residue stretch at 130 to 157 folds into the KOW domain; sequence EGDVVQIIDGAFMGQEGRVVEIENNKVK.

It belongs to the NusG family.

Participates in transcription elongation, termination and antitermination. In Streptococcus pyogenes serotype M1, this protein is Transcription termination/antitermination protein NusG.